The sequence spans 792 residues: uncharacterized protein (792 aa).

A substrate-binding site is contributed by 361-362 (WD). E488 acts as the Proton donor in catalysis. 590–591 (KQ) is a binding site for substrate. The tract at residues 753–792 (DSPSTIAVRDRKPLLPPPSQPPGREPVSRRHKSLIISAAR) is disordered. Over residues 766–776 (LLPPPSQPPGR) the composition is skewed to pro residues.

The protein belongs to the glycosyl hydrolase 65 family.

This is an uncharacterized protein from Mycobacterium leprae (strain TN).